A 521-amino-acid polypeptide reads, in one-letter code: Bifunctional purine biosynthesis protein PurH (521 aa).

An MGS-like domain is found at 1-145; sequence MIKQALISVS…KNHRDVTVVV (145 aa).

It belongs to the PurH family.

It carries out the reaction (6R)-10-formyltetrahydrofolate + 5-amino-1-(5-phospho-beta-D-ribosyl)imidazole-4-carboxamide = 5-formamido-1-(5-phospho-D-ribosyl)imidazole-4-carboxamide + (6S)-5,6,7,8-tetrahydrofolate. The catalysed reaction is IMP + H2O = 5-formamido-1-(5-phospho-D-ribosyl)imidazole-4-carboxamide. Its pathway is purine metabolism; IMP biosynthesis via de novo pathway; 5-formamido-1-(5-phospho-D-ribosyl)imidazole-4-carboxamide from 5-amino-1-(5-phospho-D-ribosyl)imidazole-4-carboxamide (10-formyl THF route): step 1/1. It functions in the pathway purine metabolism; IMP biosynthesis via de novo pathway; IMP from 5-formamido-1-(5-phospho-D-ribosyl)imidazole-4-carboxamide: step 1/1. In Paraburkholderia phytofirmans (strain DSM 17436 / LMG 22146 / PsJN) (Burkholderia phytofirmans), this protein is Bifunctional purine biosynthesis protein PurH.